The sequence spans 694 residues: Probable metal-nicotianamine transporter YSL8 (694 aa).

The next 14 helical transmembrane spans lie at 38–58, 62–82, 110–130, 154–174, 215–235, 265–285, 319–339, 393–413, 421–441, 467–487, 506–526, 567–587, 608–628, and 643–663; these read ITVR…FIVM, LTSG…FFLM, CVIS…ILGM, LGRL…SIVP, ILFK…FYAA, VGVG…GSVV, VFIS…SIVL, IAAA…PHIF, VVWA…GTGL, GGVV…STAS, MFVS…MVFW, LRFC…KEVA, FFLG…LFLW, and VASG…ILSL.

This sequence belongs to the YSL (TC 2.A.67.2) family. Expressed in root epidermis and exoderm.

It is found in the membrane. Its function is as follows. May be involved in the transport of nicotianamine-chelated metals. In Oryza sativa subsp. japonica (Rice), this protein is Probable metal-nicotianamine transporter YSL8 (YSL8).